The sequence spans 125 residues: Anticoagulant salivary protein 14 (125 aa).

The first 21 residues, 1-21 (MGLTGTMLVLVSLAFFGSAAA), serve as a signal peptide directing secretion. Residues N26, N81, and N87 are each glycosylated (N-linked (GlcNAc...) asparagine). Residues 75-86 (GECHLTNNSGGP) show a composition bias toward polar residues. Positions 75-125 (GECHLTNNSGGPNETDDYTPAPTEKPKQKKKKTKKTKKPKRKSKKDQEKNL) are disordered. A responsible for anticoagulant activity region spans residues 91–125 (DYTPAPTEKPKQKKKKTKKTKKPKRKSKKDQEKNL). The span at 101-118 (KQKKKKTKKTKKPKRKSK) shows a compositional bias: basic residues.

It belongs to the salp14 family. In terms of tissue distribution, salivary gland (at protein level). Saliva (at protein level).

It localises to the secreted. Its function is as follows. Salivary anticoagulant protein that facilitates blood feeding of adult ticks on vertebrate species. Inhibits host coagulation factor Xa (F10). Blocks the assembly and/or early activity of the prothrombinase complex (Xa-Va/F10-F5). Inhibits the lectin pathway of complement system activation in the host. In Ixodes scapularis (Black-legged tick), this protein is Anticoagulant salivary protein 14.